The sequence spans 168 residues: Transmembrane protein 31 (168 aa).

Basic and acidic residues predominate over residues 1–11; the sequence is MRLTEKSEGEQ. Positions 1–63 are disordered; sequence MRLTEKSEGE…LPSRRTPTTS (63 aa). 2 stretches are compositionally biased toward polar residues: residues 13–22 and 35–48; these read LKPNNSNAPN and HTPA…ADTQ. Positions 49-63 are enriched in low complexity; it reads PSRCRLPSRRTPTTS. The next 2 membrane-spanning stretches (helical) occupy residues 119–139 and 148–168; these read IGLP…YKFF and FFIL…LIFF.

Its subcellular location is the membrane. The protein is Transmembrane protein 31 (TMEM31) of Homo sapiens (Human).